A 129-amino-acid chain; its full sequence is Snaclec coagulation factor IX-binding protein subunit A (129 aa).

The C-type lectin domain occupies 1–129; it reads DCPSGWSSYE…GQQNPFVCEA (129 aa). Cystine bridges form between C2–C13, C30–C127, and C102–C119. S41, E43, and E47 together coordinate Ca(2+). Residue E128 participates in Ca(2+) binding.

It belongs to the snaclec family. Heterodimer of subunits A and B; disulfide-linked. Expressed by the venom gland.

It is found in the secreted. Anticoagulant protein which binds to the gamma-carboxyglutamic acid-domain regions of factor IX (F9) (but not factor X) in the presence of calcium with a 1 to 1 stoichiometry. The sequence is that of Snaclec coagulation factor IX-binding protein subunit A from Protobothrops flavoviridis (Habu).